The sequence spans 99 residues: Aspartyl/glutamyl-tRNA(Asn/Gln) amidotransferase subunit C (99 aa).

This sequence belongs to the GatC family. As to quaternary structure, heterotrimer of A, B and C subunits.

It carries out the reaction L-glutamyl-tRNA(Gln) + L-glutamine + ATP + H2O = L-glutaminyl-tRNA(Gln) + L-glutamate + ADP + phosphate + H(+). The catalysed reaction is L-aspartyl-tRNA(Asn) + L-glutamine + ATP + H2O = L-asparaginyl-tRNA(Asn) + L-glutamate + ADP + phosphate + 2 H(+). Allows the formation of correctly charged Asn-tRNA(Asn) or Gln-tRNA(Gln) through the transamidation of misacylated Asp-tRNA(Asn) or Glu-tRNA(Gln) in organisms which lack either or both of asparaginyl-tRNA or glutaminyl-tRNA synthetases. The reaction takes place in the presence of glutamine and ATP through an activated phospho-Asp-tRNA(Asn) or phospho-Glu-tRNA(Gln). The polypeptide is Aspartyl/glutamyl-tRNA(Asn/Gln) amidotransferase subunit C (Macrococcus caseolyticus (strain JCSC5402) (Macrococcoides caseolyticum)).